Consider the following 750-residue polypeptide: Photosystem I P700 chlorophyll a apoprotein A1 (750 aa).

Helical transmembrane passes span 72–95 (VFSA…FHGA), 158–181 (LYTT…FHYH), 197–221 (MNHH…HVSL), 293–311 (TVHH…GHMY), 348–371 (WHAQ…HHMY), 387–413 (LSLF…IFMV), 435–457 (AIIS…LYIH), and 532–550 (FLVH…LILL). Positions 574 and 583 each coordinate [4Fe-4S] cluster. Helical transmembrane passes span 590 to 611 (HVFL…HFSW) and 664 to 686 (LSAY…MFLF). His-675 lines the chlorophyll a' pocket. The chlorophyll a site is built by Met-683 and Tyr-691. Trp-692 contributes to the phylloquinone binding site. Residues 724 to 744 (AVGVAHYLLGGIATTWAFFLA) traverse the membrane as a helical segment.

The protein belongs to the PsaA/PsaB family. As to quaternary structure, the PsaA/B heterodimer binds the P700 chlorophyll special pair and subsequent electron acceptors. PSI consists of a core antenna complex that captures photons, and an electron transfer chain that converts photonic excitation into a charge separation. The eukaryotic PSI reaction center is composed of at least 11 subunits. P700 is a chlorophyll a/chlorophyll a' dimer, A0 is one or more chlorophyll a, A1 is one or both phylloquinones and FX is a shared 4Fe-4S iron-sulfur center. is required as a cofactor.

Its subcellular location is the plastid. The protein localises to the chloroplast thylakoid membrane. It catalyses the reaction reduced [plastocyanin] + hnu + oxidized [2Fe-2S]-[ferredoxin] = oxidized [plastocyanin] + reduced [2Fe-2S]-[ferredoxin]. In terms of biological role, psaA and PsaB bind P700, the primary electron donor of photosystem I (PSI), as well as the electron acceptors A0, A1 and FX. PSI is a plastocyanin-ferredoxin oxidoreductase, converting photonic excitation into a charge separation, which transfers an electron from the donor P700 chlorophyll pair to the spectroscopically characterized acceptors A0, A1, FX, FA and FB in turn. Oxidized P700 is reduced on the lumenal side of the thylakoid membrane by plastocyanin. The chain is Photosystem I P700 chlorophyll a apoprotein A1 from Mesostigma viride (Green alga).